The chain runs to 211 residues: Uracil phosphoribosyltransferase (211 aa).

5-phospho-alpha-D-ribose 1-diphosphate-binding positions include Arg78, Arg103, and 130–138 (DPMLATGSS). Residues Ile193 and 198 to 200 (GDA) contribute to the uracil site. Asp199 provides a ligand contact to 5-phospho-alpha-D-ribose 1-diphosphate.

Belongs to the UPRTase family. It depends on Mg(2+) as a cofactor.

The enzyme catalyses UMP + diphosphate = 5-phospho-alpha-D-ribose 1-diphosphate + uracil. The protein operates within pyrimidine metabolism; UMP biosynthesis via salvage pathway; UMP from uracil: step 1/1. Its activity is regulated as follows. Allosterically activated by GTP. Its function is as follows. Catalyzes the conversion of uracil and 5-phospho-alpha-D-ribose 1-diphosphate (PRPP) to UMP and diphosphate. This is Uracil phosphoribosyltransferase from Acinetobacter baylyi (strain ATCC 33305 / BD413 / ADP1).